Consider the following 297-residue polypeptide: N-acetylmuramic acid 6-phosphate etherase (297 aa).

One can recognise an SIS domain in the interval 55–218 (AAAALTRGGR…STGAMVKCGK (164 aa)). Glu-83 acts as the Proton donor in catalysis. Glu-114 is an active-site residue.

It belongs to the GCKR-like family. MurNAc-6-P etherase subfamily. Homodimer.

It carries out the reaction N-acetyl-D-muramate 6-phosphate + H2O = N-acetyl-D-glucosamine 6-phosphate + (R)-lactate. It functions in the pathway amino-sugar metabolism; 1,6-anhydro-N-acetylmuramate degradation. The protein operates within amino-sugar metabolism; N-acetylmuramate degradation. Its pathway is cell wall biogenesis; peptidoglycan recycling. Functionally, specifically catalyzes the cleavage of the D-lactyl ether substituent of MurNAc 6-phosphate, producing GlcNAc 6-phosphate and D-lactate. Together with AnmK, is also required for the utilization of anhydro-N-acetylmuramic acid (anhMurNAc) either imported from the medium or derived from its own cell wall murein, and thus plays a role in cell wall recycling. This chain is N-acetylmuramic acid 6-phosphate etherase, found in Cronobacter sakazakii (strain ATCC BAA-894) (Enterobacter sakazakii).